Reading from the N-terminus, the 909-residue chain is Translation initiation factor IF-2 (909 aa).

The interval 49–314 (LNREQGGSAG…GKQRKTSTLQ (266 aa)) is disordered. Composition is skewed to basic and acidic residues over residues 99-177 (DAVE…EHKQ), 186-236 (IQSE…KWSS), and 255-270 (RAAE…GDRR). Basic residues predominate over residues 271–285 (ARGRSGKATRQKKNN). Over residues 286-299 (KHSESKADREEARA) the composition is skewed to basic and acidic residues. The region spanning 408–577 (PRAPVVTIMG…LLQAEVLELK (170 aa)) is the tr-type G domain. The G1 stretch occupies residues 417 to 424 (GHVDHGKT). 417–424 (GHVDHGKT) provides a ligand contact to GTP. Positions 442-446 (GITQH) are G2. The interval 463–466 (DTPG) is G3. GTP is bound by residues 463–467 (DTPGH) and 517–520 (NKID). Residues 517 to 520 (NKID) are G4. The G5 stretch occupies residues 553 to 555 (SAK).

Belongs to the TRAFAC class translation factor GTPase superfamily. Classic translation factor GTPase family. IF-2 subfamily.

Its subcellular location is the cytoplasm. In terms of biological role, one of the essential components for the initiation of protein synthesis. Protects formylmethionyl-tRNA from spontaneous hydrolysis and promotes its binding to the 30S ribosomal subunits. Also involved in the hydrolysis of GTP during the formation of the 70S ribosomal complex. The polypeptide is Translation initiation factor IF-2 (Photorhabdus laumondii subsp. laumondii (strain DSM 15139 / CIP 105565 / TT01) (Photorhabdus luminescens subsp. laumondii)).